The primary structure comprises 185 residues: Ribosome maturation factor RimP (185 aa).

This sequence belongs to the RimP family.

It is found in the cytoplasm. Its function is as follows. Required for maturation of 30S ribosomal subunits. This chain is Ribosome maturation factor RimP, found in Magnetococcus marinus (strain ATCC BAA-1437 / JCM 17883 / MC-1).